Reading from the N-terminus, the 400-residue chain is CCA-adding enzyme (400 aa).

ATP contacts are provided by glycine 28 and arginine 31. Glycine 28 and arginine 31 together coordinate CTP. Mg(2+) contacts are provided by aspartate 41 and aspartate 43. Residues arginine 112, aspartate 155, arginine 158, arginine 161, and arginine 164 each coordinate ATP. The CTP site is built by arginine 112, aspartate 155, arginine 158, arginine 161, and arginine 164.

Belongs to the tRNA nucleotidyltransferase/poly(A) polymerase family. Bacterial CCA-adding enzyme type 3 subfamily. Homodimer. It depends on Mg(2+) as a cofactor.

It catalyses the reaction a tRNA precursor + 2 CTP + ATP = a tRNA with a 3' CCA end + 3 diphosphate. It carries out the reaction a tRNA with a 3' CCA end + 2 CTP + ATP = a tRNA with a 3' CCACCA end + 3 diphosphate. Functionally, catalyzes the addition and repair of the essential 3'-terminal CCA sequence in tRNAs without using a nucleic acid template. Adds these three nucleotides in the order of C, C, and A to the tRNA nucleotide-73, using CTP and ATP as substrates and producing inorganic pyrophosphate. tRNA 3'-terminal CCA addition is required both for tRNA processing and repair. Also involved in tRNA surveillance by mediating tandem CCA addition to generate a CCACCA at the 3' terminus of unstable tRNAs. While stable tRNAs receive only 3'-terminal CCA, unstable tRNAs are marked with CCACCA and rapidly degraded. In Staphylococcus aureus (strain bovine RF122 / ET3-1), this protein is CCA-adding enzyme.